The following is a 172-amino-acid chain: Small t antigen (172 aa).

Met1 carries the N-acetylmethionine; by host modification. The J domain occupies 12-75 (ELMDLLGLER…VKVAHQPDFG (64 aa)). Residues 101-114 (CATKPSAHCPCMLC) form a C4-type; atypical zinc finger. The H1C3-type; atypical zinc finger occupies 120 to 141 (HVYRKFLRRDPLVWIDCYCFDC).

As to quaternary structure, interacts with host PPP2R1A; the interaction inhibits PP2A activity.

It is found in the host cytoplasm. The protein resides in the host nucleus. Promotes efficient viral genome replication by accelerating both G1 and S phase progression of the cell cycle. Inhibits host PP2A by binding to the A subunit, thereby displacing lower affinity regulatory B subunit. Inactivation of PP2A in turn results in the transactivation of cyclin A and cyclin D1 promoters. Late during the infection cycle, ST may induce dephosphorylation of host MTOR, leading to the inhibition of cap-dependent translation. May establish and maintain high levels of viral genomes during persistent infection in cell culture. The polypeptide is Small t antigen (Simian virus 12 (strain wt100) (SV-12)).